We begin with the raw amino-acid sequence, 238 residues long: 3-deoxy-D-manno-octulosonic acid kinase (238 aa).

Asp-167 is a catalytic residue.

It belongs to the protein kinase superfamily. KdkA/RfaP family.

Its subcellular location is the cell inner membrane. It carries out the reaction an alpha-Kdo-(2-&gt;6)-lipid IVA + ATP = a 4-O-phospho-alpha-Kdo-(2-&gt;6)-lipid IVA + ADP + H(+). It functions in the pathway bacterial outer membrane biogenesis; LPS core biosynthesis. Functionally, catalyzes the ATP-dependent phosphorylation of the 3-deoxy-D-manno-octulosonic acid (Kdo) residue in Kdo-lipid IV(A) at the 4-OH position. This Vibrio parahaemolyticus serotype O3:K6 (strain RIMD 2210633) protein is 3-deoxy-D-manno-octulosonic acid kinase.